The chain runs to 228 residues: NAD(P)H-hydrate epimerase (228 aa).

The YjeF N-terminal domain maps to 10 to 214 (AIDIDQELFN…DLERKYDLKI (205 aa)). Residue 58–62 (NNGGD) coordinates (6S)-NADPHX. Residues Asn59 and Asp123 each contribute to the K(+) site. (6S)-NADPHX-binding positions include 127–133 (GFSFKPP) and Asp156. Ser159 serves as a coordination point for K(+).

Belongs to the NnrE/AIBP family. Requires K(+) as cofactor.

The enzyme catalyses (6R)-NADHX = (6S)-NADHX. It carries out the reaction (6R)-NADPHX = (6S)-NADPHX. In terms of biological role, catalyzes the epimerization of the S- and R-forms of NAD(P)HX, a damaged form of NAD(P)H that is a result of enzymatic or heat-dependent hydration. This is a prerequisite for the S-specific NAD(P)H-hydrate dehydratase to allow the repair of both epimers of NAD(P)HX. This Pediculus humanus subsp. corporis (Body louse) protein is NAD(P)H-hydrate epimerase.